The primary structure comprises 131 residues: Glycine cleavage system H protein (131 aa).

Residues 24–106 enclose the Lipoyl-binding domain; it reads RVTVGISDHA…YGDGWMYVVE (83 aa). Lys65 is modified (N6-lipoyllysine).

The protein belongs to the GcvH family. The glycine cleavage system is composed of four proteins: P, T, L and H. Requires (R)-lipoate as cofactor.

The glycine cleavage system catalyzes the degradation of glycine. The H protein shuttles the methylamine group of glycine from the P protein to the T protein. In Stenotrophomonas maltophilia (strain R551-3), this protein is Glycine cleavage system H protein.